Reading from the N-terminus, the 195-residue chain is Calcineurin B homologous protein 1 (195 aa).

G2 is lipidated: N-myristoyl glycine. Positions 2–6 (GSRAS) match the Necessary for association with microtubule and interaction with GAPDH motif. EF-hand domains follow at residues 26-61 (SQITRLYSRFTSLDKGENGTLSREDFQRIPELAINP), 71-106 (FSEGEDQVNFRGFMRTLAHFRPIEDNEKSKDVNGPE), 110-145 (SRSNKLHFAFRLYDLDKDDKISRDELLQVLRMMVGV), and 151-186 (QLGSIADRTIQEADQDGDSAISFTEFVKVLEKVDVE). D123, D125, D127, K129, and E134 together coordinate Ca(2+). Positions 138-147 (VLRMMVGVNI) match the Nuclear export signal 1 motif. D164, D166, D168, and E175 together coordinate Ca(2+). The Nuclear export signal 2 signature appears at 176 to 185 (FVKVLEKVDV).

It belongs to the calcineurin regulatory subunit family. CHP subfamily. Monomer. Interacts with STK17B; the interaction occurs in a calcium-independent manner and induces the translocation of CHP1 from the Golgi to the nucleus. Interacts with GAPDH; the interaction is direct, occurs in a N-myristoylation-dependent manner and facilitates the ability of CHP1 to bind microtubules. Interacts with KIF1B (via the C-terminal end of the kinesin-motor domain); the interaction occurs in a calcium-dependent manner. Associates (via C-terminal domain) with microtubules; the association occurs with polymerized microtubules during the cell cycle in a myristoylation- and calcium-independent manner and is enhanced by GAPDH. Interacts with PPP3CA. Interacts with SLC9A1/NHE1 (via the cytoplasmic C-terminal domain); the interaction occurs at the plasma membrane in a calcium-dependent manner and at a domain that is critical for growth factor stimulation of the exchanger. Interacts with SLC9A3; increases SLC9A3 trafficking and activity at the plasma membrane. Post-translationally, phosphorylated; decreased phosphorylation is associated with an increase in SLC9A1/NHE1 Na(+)/H(+) exchange activity. Phosphorylation occurs in serum-dependent manner. The phosphorylation state may regulate the binding to SLC9A1/NHE1. In terms of processing, both N-myristoylation and calcium-mediated conformational changes are essential for its function in exocytic traffic. N-myristoylation is required for its association with microtubules and interaction with GAPDH, but not for the constitutive association to membranes.

Its subcellular location is the nucleus. It is found in the cytoplasm. It localises to the cytoskeleton. The protein localises to the endomembrane system. The protein resides in the endoplasmic reticulum-Golgi intermediate compartment. Its subcellular location is the endoplasmic reticulum. It is found in the cell membrane. It localises to the membrane. Functionally, calcium-binding protein involved in different processes such as regulation of vesicular trafficking, plasma membrane Na(+)/H(+) exchanger and gene transcription. Involved in the constitutive exocytic membrane traffic. Mediates the association between microtubules and membrane-bound organelles of the endoplasmic reticulum and Golgi apparatus and is also required for the targeting and fusion of transcytotic vesicles (TCV) with the plasma membrane. Functions as an integral cofactor in cell pH regulation by controlling plasma membrane-type Na(+)/H(+) exchange activity. Affects the pH sensitivity of SLC9A1/NHE1 by increasing its sensitivity at acidic pH. Required for the stabilization and localization of SLC9A1/NHE1 at the plasma membranes. Inhibits serum- and GTPase-stimulated Na(+)/H(+) exchange. Plays a role as an inhibitor of ribosomal RNA transcription by repressing the nucleolar UBF1 transcriptional activity. May sequester UBF1 in the nucleoplasm and limit its translocation to the nucleolus. Associates to the ribosomal gene promoter. Acts as a negative regulator of the calcineurin/NFAT signaling pathway. Inhibits NFAT nuclear translocation and transcriptional activity by suppressing the calcium-dependent calcineurin phosphatase activity. Also negatively regulates the kinase activity of the apoptosis-induced kinase STK17B. Inhibits both STK17B auto- and substrate-phosphorylations in a calcium-dependent manner. This is Calcineurin B homologous protein 1 (Chp1) from Mus musculus (Mouse).